The primary structure comprises 217 residues: FMN-dependent NADH:quinone oxidoreductase (217 aa).

Residues Ser-10, 17-19 (SAS), and 137-140 (SRGG) contribute to the FMN site.

It belongs to the azoreductase type 1 family. In terms of assembly, homodimer. Requires FMN as cofactor.

It catalyses the reaction 2 a quinone + NADH + H(+) = 2 a 1,4-benzosemiquinone + NAD(+). It carries out the reaction N,N-dimethyl-1,4-phenylenediamine + anthranilate + 2 NAD(+) = 2-(4-dimethylaminophenyl)diazenylbenzoate + 2 NADH + 2 H(+). In terms of biological role, quinone reductase that provides resistance to thiol-specific stress caused by electrophilic quinones. Also exhibits azoreductase activity. Catalyzes the reductive cleavage of the azo bond in aromatic azo compounds to the corresponding amines. In Streptomyces avermitilis (strain ATCC 31267 / DSM 46492 / JCM 5070 / NBRC 14893 / NCIMB 12804 / NRRL 8165 / MA-4680), this protein is FMN-dependent NADH:quinone oxidoreductase.